The primary structure comprises 173 residues: Large ribosomal subunit protein uL5 (173 aa).

The protein belongs to the universal ribosomal protein uL5 family. As to quaternary structure, component of the large ribosomal subunit.

Its subcellular location is the nucleus. The protein resides in the cytoplasm. Component of the ribosome, a large ribonucleoprotein complex responsible for the synthesis of proteins in the cell. The small ribosomal subunit (SSU) binds messenger RNAs (mRNAs) and translates the encoded message by selecting cognate aminoacyl-transfer RNA (tRNA) molecules. The large subunit (LSU) contains the ribosomal catalytic site termed the peptidyl transferase center (PTC), which catalyzes the formation of peptide bonds, thereby polymerizing the amino acids delivered by tRNAs into a polypeptide chain. The nascent polypeptides leave the ribosome through a tunnel in the LSU and interact with protein factors that function in enzymatic processing, targeting, and the membrane insertion of nascent chains at the exit of the ribosomal tunnel. The polypeptide is Large ribosomal subunit protein uL5 (RPL11) (Encephalitozoon cuniculi (strain GB-M1) (Microsporidian parasite)).